Consider the following 861-residue polypeptide: Protein argonaute-4 (861 aa).

Positions 219–338 (PIIEFMCEVL…LPLEVCNIVA (120 aa)) constitute a PAZ domain. The Piwi domain occupies 509–820 (LIVVILPGKT…VAFRARYHLV (312 aa)). The tract at residues 825-846 (DSAEGSHVSGQSNGRDPQALAK) is disordered.

This sequence belongs to the argonaute family. Ago subfamily. In terms of assembly, interacts with EIF4B, IMP8, PRMT5, TNRC6A and TNRC6B. Interacts with ZFP36. Post-translationally, ubiquitinated on surface-exposed lysines by a SCF-like E3 ubiquitin-protein ligase complex containing ZSWIM8 during target-directed microRNA degradation (TDMD), a process that mediates degradation of microRNAs (miRNAs). Ubiquitination by the SCF-like E3 ubiquitin-protein ligase complex containing ZSWIM8 leads to its subsequent degradation, thereby exposing miRNAs for degradation. ZSWIM8 recognizes and binds AGO4 when it is engaged with a TDMD target.

The protein localises to the cytoplasm. Its subcellular location is the P-body. Functionally, required for RNA-mediated gene silencing (RNAi). Binds to short RNAs such as microRNAs (miRNAs) and represses the translation of mRNAs which are complementary to them. Lacks endonuclease activity and does not appear to cleave target mRNAs. Also required for RNA-directed transcription and replication of the human hapatitis delta virus (HDV). The sequence is that of Protein argonaute-4 (AGO4) from Homo sapiens (Human).